We begin with the raw amino-acid sequence, 319 residues long: Sliding-clamp-loader large subunit (319 aa).

ATP-binding positions include 12–15, isoleucine 24, 53–58, and arginine 205; these read EQKY and GTGKTT.

Belongs to the Tevenvirinae sliding-clamp-loader large subunit family. In terms of assembly, the sliding-clamp-loader consists of 4 large subunits and 1 small subunit. Interacts with the sliding clamp; this interaction allows the sliding-clamp-loader to open the sliding clamp. Part of the replicase complex that includes the DNA polymerase, the polymerase clamp, the clamp loader complex, the single-stranded DNA binding protein, the primase, the helicase and the helicase assembly factor.

In terms of biological role, forms the sliding-clamp-loader together with the small subunit. Functions as an ATPase enzyme. The clamp loader holds the clamp in an open conformation and places it onto the DNA. 4 ATP molecules must bind to the sliding-clamp-loader before the latter can open the sliding clamp. ATP hydrolysis triggers the detachment of the sliding clamp from the sliding-clamp-loader, freeing the sliding clamp to track along DNA. This Enterobacteria phage T4 (Bacteriophage T4) protein is Sliding-clamp-loader large subunit (44).